Here is a 427-residue protein sequence, read N- to C-terminus: 3-phosphoshikimate 1-carboxyvinyltransferase (427 aa).

3 residues coordinate 3-phosphoshikimate: lysine 20, serine 21, and arginine 25. Phosphoenolpyruvate is bound at residue lysine 20. Phosphoenolpyruvate-binding residues include glycine 92 and arginine 120. 3-phosphoshikimate is bound by residues serine 166, glutamine 168, aspartate 312, and lysine 339. Position 168 (glutamine 168) interacts with phosphoenolpyruvate. The active-site Proton acceptor is the aspartate 312. Phosphoenolpyruvate contacts are provided by arginine 343 and arginine 385.

It belongs to the EPSP synthase family. Monomer.

The protein resides in the cytoplasm. The enzyme catalyses 3-phosphoshikimate + phosphoenolpyruvate = 5-O-(1-carboxyvinyl)-3-phosphoshikimate + phosphate. It participates in metabolic intermediate biosynthesis; chorismate biosynthesis; chorismate from D-erythrose 4-phosphate and phosphoenolpyruvate: step 6/7. Functionally, catalyzes the transfer of the enolpyruvyl moiety of phosphoenolpyruvate (PEP) to the 5-hydroxyl of shikimate-3-phosphate (S3P) to produce enolpyruvyl shikimate-3-phosphate and inorganic phosphate. The protein is 3-phosphoshikimate 1-carboxyvinyltransferase of Streptococcus pyogenes serotype M49 (strain NZ131).